The sequence spans 131 residues: Maturin (131 aa).

The segment covering Phe107–Glu120 has biased composition (acidic residues). Positions Phe107–Gln131 are disordered.

Belongs to the MTURN family.

It localises to the cytoplasm. Functionally, involved in early neuronal development; required for cell cycle exit and differentiation of primary neurons. Cooperates synergistically with pak3 to promote primary neural differentiation within the neural plate. May play a role in promoting megakaryocyte differentiation. In Xenopus laevis (African clawed frog), this protein is Maturin (mturn).